Consider the following 169-residue polypeptide: Probable chemoreceptor glutamine deamidase CheD (169 aa).

It belongs to the CheD family.

It catalyses the reaction L-glutaminyl-[protein] + H2O = L-glutamyl-[protein] + NH4(+). Functionally, probably deamidates glutamine residues to glutamate on methyl-accepting chemotaxis receptors (MCPs), playing an important role in chemotaxis. This chain is Probable chemoreceptor glutamine deamidase CheD, found in Solibacter usitatus (strain Ellin6076).